Here is a 183-residue protein sequence, read N- to C-terminus: Translation initiation factor IF-3 (183 aa).

Belongs to the IF-3 family. Monomer.

The protein resides in the cytoplasm. Functionally, IF-3 binds to the 30S ribosomal subunit and shifts the equilibrium between 70S ribosomes and their 50S and 30S subunits in favor of the free subunits, thus enhancing the availability of 30S subunits on which protein synthesis initiation begins. This is Translation initiation factor IF-3 from Pseudomonas putida (strain W619).